The chain runs to 656 residues: DNA ligase (656 aa).

NAD(+) contacts are provided by residues 32-36 (DEEYD), 81-82 (SM), and Glu-112. Lys-114 serves as the catalytic N6-AMP-lysine intermediate. NAD(+) is bound by residues Arg-135, Glu-169, Lys-284, and Lys-308. The Zn(2+) site is built by Cys-402, Cys-405, Cys-418, and Cys-423. One can recognise a BRCT domain in the interval 577 to 656 (VQKTPFTGKT…DMWKMLKEGK (80 aa)).

This sequence belongs to the NAD-dependent DNA ligase family. LigA subfamily. Requires Mg(2+) as cofactor. Mn(2+) is required as a cofactor.

It catalyses the reaction NAD(+) + (deoxyribonucleotide)n-3'-hydroxyl + 5'-phospho-(deoxyribonucleotide)m = (deoxyribonucleotide)n+m + AMP + beta-nicotinamide D-nucleotide.. In terms of biological role, DNA ligase that catalyzes the formation of phosphodiester linkages between 5'-phosphoryl and 3'-hydroxyl groups in double-stranded DNA using NAD as a coenzyme and as the energy source for the reaction. It is essential for DNA replication and repair of damaged DNA. This is DNA ligase from Nautilia profundicola (strain ATCC BAA-1463 / DSM 18972 / AmH).